A 161-amino-acid polypeptide reads, in one-letter code: Small ribosomal subunit protein uS9 (161 aa).

Residues methionine 1–glutamate 21 show a composition bias toward polar residues. Positions methionine 1–proline 25 are disordered.

This sequence belongs to the universal ribosomal protein uS9 family.

This chain is Small ribosomal subunit protein uS9, found in Methylorubrum populi (strain ATCC BAA-705 / NCIMB 13946 / BJ001) (Methylobacterium populi).